The sequence spans 60 residues: UPF0434 protein NMCC_0628 (60 aa).

The protein belongs to the UPF0434 family.

In Neisseria meningitidis serogroup C (strain 053442), this protein is UPF0434 protein NMCC_0628.